We begin with the raw amino-acid sequence, 169 residues long: Zinc metalloproteinase-disintegrin-like mikarin (169 aa).

One can recognise a Peptidase M12B domain in the interval 14–57 (KYLEYVVVDNNMYRNYGNAGPCVMSAEISFEPLQEFSSCDIQEP). Residues 65–129 (PAVCGNYYVE…PEICTGRSAK (65 aa)) enclose the Disintegrin domain. Intrachain disulfides connect C68-C97, C79-C92, C81-C87, C105-C111, C110-C123, and C150-C161. The D/ECD-tripeptide motif lies at 116–118 (DCD).

This sequence belongs to the venom metalloproteinase (M12B) family. P-III subfamily. P-IIIa sub-subfamily. In terms of assembly, monomer. Zn(2+) is required as a cofactor. In terms of tissue distribution, expressed by the venom gland.

The protein resides in the secreted. With respect to regulation, inhibited by EDTA, but not by PMSF. Snake venom zinc metalloproteinase that calcium-independently catalyzes the conversion of prothrombin (F2) to alpha-thrombin through the formation of a thrombin intermediate. This Micropechis ikaheca (New Guinean small-eyed snake) protein is Zinc metalloproteinase-disintegrin-like mikarin.